A 652-amino-acid chain; its full sequence is ATP-dependent RNA helicase DDX51 (652 aa).

The disordered stretch occupies residues 1–145; the sequence is MALFTINRYL…KAEKAEELTS (145 aa). Over residues 25–34 the composition is skewed to low complexity; sequence KALLAKLQKQ. 2 stretches are compositionally biased toward basic and acidic residues: residues 66–77 and 107–122; these read LQETKGKIKKSE and VIVK…EKSV. The short motif at 212–220 is the Q motif element; sequence FFPVQAEVI. One can recognise a Helicase ATP-binding domain in the interval 234–442; the sequence is GPGGYRPRDV…LLDLHQPRLF (209 aa). 247-254 contacts ATP; that stretch reads APTGSGKT. Residues 362 to 365 carry the DEAD box motif; the sequence is DEAD. The Helicase C-terminal domain occupies 480 to 626; it reads IILHFLLRLK…KQHVHPEALK (147 aa).

This sequence belongs to the DEAD box helicase family. DDX51/DBP6 subfamily.

It localises to the nucleus. It is found in the nucleolus. It carries out the reaction ATP + H2O = ADP + phosphate + H(+). In terms of biological role, ATP-binding RNA helicase involved in the biogenesis of 60S ribosomal subunits. The protein is ATP-dependent RNA helicase DDX51 (ddx51) of Danio rerio (Zebrafish).